The following is a 294-amino-acid chain: Cyclin-dependent kinase A-1 (294 aa).

The 284-residue stretch at 4–287 (YEKVEKIGEG…ARAALEHEYF (284 aa)) folds into the Protein kinase domain. ATP is bound by residues 10-18 (IGEGTYGVV) and Lys33. Tyr15 is modified (phosphotyrosine). The active-site Proton acceptor is Asp127. Thr161 is subject to Phosphothreonine.

It belongs to the protein kinase superfamily. CMGC Ser/Thr protein kinase family. CDC2/CDKX subfamily. As to quaternary structure, interacts with CDT1A, CYCA2-3, CYCD2-1, CYCD3-1, CYCD4-1, CYCD4-2, CYCH1-1, CYCU1-1, CYCU2-1, CYCU2-2, CYCU3-1, CYCU4-1, CYCU4-2, CYCU4-3, CKS1, KRP2/ICK2, KRP3/ICK6, KRP4/ICK7, KRP6/ICK4, KRP7/ICK5, and C-terminal domain of KRP1/ICK1. Interacts with WEE1 and TIF4A-1/EIF4A-1. Interacts with PAS2; when phosphorylated at Tyr-15. Interacts with SMR3, SMR4, SMR5, SMR6, SMR8 and At4g14310. Binds to CYCD3-2. Component of a DREAM-like complex which modulates a variety of developmentally regulated genes and of the mitotic genes in proliferating and differentiated cells. Interacts with MYB3R3 at later and with MYB3R4 at earlier stages of leaf development. May interact with SPCH. Phosphorylated at Tyr-15 by WEE1. Phosphorylation at Thr-161 is important for the kinase activity and substrate binding. Binding to the anti-phosphatase PAS2 prevents dephosphorylation. In terms of tissue distribution, expressed in roots, stems, flowers and siliques.

The protein resides in the cytoplasm. Its subcellular location is the nucleus. It carries out the reaction L-seryl-[protein] + ATP = O-phospho-L-seryl-[protein] + ADP + H(+). It catalyses the reaction L-threonyl-[protein] + ATP = O-phospho-L-threonyl-[protein] + ADP + H(+). The enzyme catalyses [DNA-directed RNA polymerase] + ATP = phospho-[DNA-directed RNA polymerase] + ADP + H(+). Its activity is regulated as follows. CDK kinase activated by CDKF-1. CDK kinase activity inhibited by KRP1/ICK1, KRP2/ICK2, KRP3/ICK6, KRP4/ICK7, KRP5/ICK3, KRP6/ICK4 and KRP7/ICK5. Down-regulated by phosphorylation by WEE1. Involved in the control of the cell cycle. Essential for both G1/S and G2/M (mitosis) phase transitions. Functions in cell morphogenesis as well as cell proliferation. Required for cell division (entry into mitosis) of the generative cell in male gametogenesis. Required to trigger guard mother cells (GMC) symmetric divisions at the late stage of stomatal development, probably via the regulation of G1 to S transition in the cell cycle. Required for the function of SPCH in entering the stomatal lineage. Promotes divisions in the guard cells (GCs) after the guard mother cells (GMC) symmetric division when in the presence of CYCD3-2 via the phosphorylation of SPCH. This is Cyclin-dependent kinase A-1 from Arabidopsis thaliana (Mouse-ear cress).